A 406-amino-acid polypeptide reads, in one-letter code: Cytochrome P450 165C4 (406 aa).

Heme is bound at residue Cys-356.

The protein belongs to the cytochrome P450 family. Requires heme as cofactor.

Its pathway is antibiotic biosynthesis; vancomycin biosynthesis. Its function is as follows. Involved in the coupling of aromatic side chains of the heptapeptide of vancomycin. The polypeptide is Cytochrome P450 165C4 (cyp165C4) (Amycolatopsis orientalis (Nocardia orientalis)).